Here is a 66-residue protein sequence, read N- to C-terminus: Large ribosomal subunit protein uL29 (66 aa).

The protein belongs to the universal ribosomal protein uL29 family.

This is Large ribosomal subunit protein uL29 from Lachnospira eligens (strain ATCC 27750 / DSM 3376 / VPI C15-48 / C15-B4) (Eubacterium eligens).